Here is a 269-residue protein sequence, read N- to C-terminus: MSLEVNWEQIASSEAIREQLVDWLNDQLKAVEVPKYLADIHVTSLSLGSKAPEITIRDIGKPFDDFYDIEEERAGTGEGDEDDGRVAPTSTPMKHQTSGSSDQTDASNPISPSTSHDHENDMQFVTEIKYDSDICVEVAAQLLMNYPAEKFISLPVRLKLSDLLIHTLAVVAYVNHRVFISLLCDISENEDTDNTESHSGNLRALSSKTASRIDVVKRLKVESELGSYEPDNGSILRSVGKIETFLVDTIRNLLVQEVGWPNWIEFQGV.

Residues 1–269 (MSLEVNWEQI…WPNWIEFQGV (269 aa)) form the SMP-LTD domain. The tract at residues 72–119 (ERAGTGEGDEDDGRVAPTSTPMKHQTSGSSDQTDASNPISPSTSHDHE) is disordered. The span at 88 to 114 (PTSTPMKHQTSGSSDQTDASNPISPST) shows a compositional bias: polar residues.

Belongs to the MDM12 family. As to quaternary structure, component of the ER-mitochondria encounter structure (ERMES) or MDM complex, composed of MMM1, MDM10, MDM12 and MDM34. An MMM1 homodimer associates with one molecule of MDM12 on each side in a pairwise head-to-tail manner, and the SMP-LTD domains of MMM1 and MDM12 generate a continuous hydrophobic tunnel for phospholipid trafficking.

The protein localises to the mitochondrion outer membrane. The protein resides in the endoplasmic reticulum membrane. Its function is as follows. Component of the ERMES/MDM complex, which serves as a molecular tether to connect the endoplasmic reticulum (ER) and mitochondria. Components of this complex are involved in the control of mitochondrial shape and protein biogenesis, and function in nonvesicular lipid trafficking between the ER and mitochondria. MDM12 is required for the interaction of the ER-resident membrane protein MMM1 and the outer mitochondrial membrane-resident beta-barrel protein MDM10. The MDM12-MMM1 subcomplex functions in the major beta-barrel assembly pathway that is responsible for biogenesis of all mitochondrial outer membrane beta-barrel proteins, and acts in a late step after the SAM complex. The MDM10-MDM12-MMM1 subcomplex further acts in the TOM40-specific pathway after the action of the MDM12-MMM1 complex. Essential for establishing and maintaining the structure of mitochondria and maintenance of mtDNA nucleoids. This Komagataella phaffii (strain GS115 / ATCC 20864) (Yeast) protein is Mitochondrial distribution and morphology protein 12.